The chain runs to 2388 residues: Spectrin beta chain, non-erythrocytic 2 (2388 aa).

Ser2 carries the post-translational modification N-acetylserine. The segment at 2–278 (SSTLSPTDFD…IITYVATYYH (277 aa)) is actin-binding. Phosphoserine occurs at positions 6 and 31. Calponin-homology (CH) domains follow at residues 57–161 (AVQK…LRFQ) and 176–281 (KSAK…HYFS). 6 Spectrin repeats span residues 306–414 (LVEK…LALR), 427–527 (AARF…RERL), 532–639 (ELQK…RLEE), 642–744 (RLWR…QRLA), 749–849 (LYQF…RALE), and 856–954 (TMLS…KAAL). Ser959 is subject to Phosphoserine. 11 Spectrin repeats span residues 960–1063 (IQNY…SLGE), 1066–1169 (RLQD…GRLA), 1174–1266 (FQGF…NQEA), 1279–1379 (EQQH…ARSL), 1384–1485 (RAEL…RRLQ), 1489–1586 (EQHQ…RLEE), 1589–1692 (RAQQ…RLQE), 1696–1797 (LCQL…GQVL), 1801–1904 (YELQ…QLLL), 1910–2010 (FRFF…DWLQ), and 2017–2078 (VFGR…LTAL). Ser1073 is modified (phosphoserine). Ser1574 is modified (phosphoserine). A compositionally biased stretch (basic and acidic residues) spans 2080-2096 (ERENEQKRKREEEERRK). Disordered regions lie at residues 2080–2112 (EREN…EGSL) and 2124–2207 (DGTQ…HVAT). Residues 2124–2163 (DGTQSKLPPSTQAPSINGVCTDTESSQPLLEQQRLEQSNV) are compositionally biased toward polar residues. Phosphoserine is present on residues Ser2169 and Ser2199. The 111-residue stretch at 2218–2328 (QEQMEGTLCR…WLRVVNAAIA (111 aa)) folds into the PH domain. The segment at 2333 to 2388 (ASGEPEEPVVPSASRGLTRAMTMPPVSQPEGSIVLRSKDGREREREKRFSFFKKNK) is disordered. Thr2354 carries the post-translational modification Phosphothreonine. Phosphoserine is present on Ser2359. The segment covering 2368–2381 (RSKDGREREREKRF) has biased composition (basic and acidic residues).

The protein belongs to the spectrin family. Abundantly transcribed in the brain. Neurons are the predominant cell-type to express the gene. Found abundantly in Purkinje cells.

The protein localises to the cytoplasm. The protein resides in the cytoskeleton. It localises to the cell cortex. Its function is as follows. Probably plays an important role in neuronal membrane skeleton. In Rattus norvegicus (Rat), this protein is Spectrin beta chain, non-erythrocytic 2 (Sptbn2).